A 207-amino-acid chain; its full sequence is Large ribosomal subunit protein uL3 (207 aa).

Belongs to the universal ribosomal protein uL3 family. Part of the 50S ribosomal subunit. Forms a cluster with proteins L14 and L19.

One of the primary rRNA binding proteins, it binds directly near the 3'-end of the 23S rRNA, where it nucleates assembly of the 50S subunit. The protein is Large ribosomal subunit protein uL3 of Desulforapulum autotrophicum (strain ATCC 43914 / DSM 3382 / VKM B-1955 / HRM2) (Desulfobacterium autotrophicum).